Consider the following 399-residue polypeptide: Forkhead box protein Q1 (399 aa).

The tract at residues 1–112 (MKLEVFAPRA…EGARSKPYTR (112 aa)) is disordered. Low complexity predominate over residues 32-54 (LSAAGDDSLGSDGDCAANSPAAG). Gly residues predominate over residues 55–66 (SGAGDLEGGGGE). Positions 114 to 205 (PKPPYSYIAL…SEYTFADGVF (92 aa)) form a DNA-binding region, fork-head. The segment at 211–263 (RLSHRTTVSASGYGGGSPPGPAGTPQPAPTAGSSPIARSPARQEEGSSPASKF) is disordered. Pro residues predominate over residues 228–238 (PPGPAGTPQPA).

It localises to the nucleus. Plays a role in hair follicle differentiation. This is Forkhead box protein Q1 (Foxq1) from Rattus norvegicus (Rat).